A 400-amino-acid polypeptide reads, in one-letter code: Elongation factor Tu 2 (400 aa).

A tr-type G domain is found at 10–209 (KPHVNIGTIG…KVDEYIPTPQ (200 aa)). Residues 19 to 26 (GHVDHGKT) are G1. 19–26 (GHVDHGKT) is a GTP binding site. A Mg(2+)-binding site is contributed by threonine 26. Residues 60–64 (GITIN) form a G2 region. The segment at 81–84 (DCPG) is G3. GTP contacts are provided by residues 81-85 (DCPGH) and 136-139 (NKAD). A G4 region spans residues 136–139 (NKAD). Positions 174–176 (SAL) are G5.

Belongs to the TRAFAC class translation factor GTPase superfamily. Classic translation factor GTPase family. EF-Tu/EF-1A subfamily. Monomer.

It is found in the cytoplasm. The enzyme catalyses GTP + H2O = GDP + phosphate + H(+). Its function is as follows. GTP hydrolase that promotes the GTP-dependent binding of aminoacyl-tRNA to the A-site of ribosomes during protein biosynthesis. In Carboxydothermus hydrogenoformans (strain ATCC BAA-161 / DSM 6008 / Z-2901), this protein is Elongation factor Tu 2.